The chain runs to 241 residues: Glucosamine-6-phosphate deaminase (241 aa).

Asp-67 acts as the Proton acceptor; for enolization step in catalysis. Residue Asn-136 is the For ring-opening step of the active site. His-138 functions as the Proton acceptor; for ring-opening step in the catalytic mechanism. The For ring-opening step role is filled by Glu-143.

The protein belongs to the glucosamine/galactosamine-6-phosphate isomerase family. NagB subfamily.

The enzyme catalyses alpha-D-glucosamine 6-phosphate + H2O = beta-D-fructose 6-phosphate + NH4(+). Its pathway is amino-sugar metabolism; N-acetylneuraminate degradation; D-fructose 6-phosphate from N-acetylneuraminate: step 5/5. Functionally, catalyzes the reversible isomerization-deamination of glucosamine 6-phosphate (GlcN6P) to form fructose 6-phosphate (Fru6P) and ammonium ion. This Clostridium acetobutylicum (strain ATCC 824 / DSM 792 / JCM 1419 / IAM 19013 / LMG 5710 / NBRC 13948 / NRRL B-527 / VKM B-1787 / 2291 / W) protein is Glucosamine-6-phosphate deaminase.